The sequence spans 376 residues: Alanine racemase (376 aa).

Lysine 40 functions as the Proton acceptor; specific for D-alanine in the catalytic mechanism. The residue at position 40 (lysine 40) is an N6-(pyridoxal phosphate)lysine. Arginine 138 provides a ligand contact to substrate. Tyrosine 270 serves as the catalytic Proton acceptor; specific for L-alanine. Methionine 317 provides a ligand contact to substrate.

It belongs to the alanine racemase family. Pyridoxal 5'-phosphate serves as cofactor.

It carries out the reaction L-alanine = D-alanine. It functions in the pathway amino-acid biosynthesis; D-alanine biosynthesis; D-alanine from L-alanine: step 1/1. Its function is as follows. Catalyzes the interconversion of L-alanine and D-alanine. May also act on other amino acids. This is Alanine racemase (alr) from Lactobacillus delbrueckii subsp. bulgaricus (strain ATCC BAA-365 / Lb-18).